The following is a 264-amino-acid chain: Transformer-2 sex-determining protein (264 aa).

Positions 1-96 are disordered; that stretch reads MDREPLSSGR…HKSREHPQAS (96 aa). Positions 13 to 22 are enriched in basic residues; sequence CSARYKHKRS. Positions 23-33 are enriched in low complexity; the sequence is ASSSSAGTTSS. S40 carries the phosphoserine modification. A compositionally biased stretch (basic residues) spans 47 to 61; the sequence is SRRHQRSSSRRRSRS. The segment covering 71 to 85 has biased composition (basic and acidic residues); it reads EPRHRSGRSSRDRER. In terms of domain architecture, RRM spans 97-175; it reads RCIGVFGLNT…RRIRVDFSIT (79 aa). The tract at residues 176–196 is linker; that stretch reads QRAHTPTPGVYLGRQPRGKAP. The tract at residues 179–264 is disordered; that stretch reads HTPTPGVYLG…PQLRRTSSRY (86 aa). Residue T180 is modified to Phosphothreonine. Basic residues predominate over residues 191–206; it reads PRGKAPRSFSPRRGRR. Positions 207–234 are enriched in basic and acidic residues; it reads VYHDRSASPYDNYRDRYDYRNDRYDRNL. Phosphoserine occurs at positions 212 and 214. Residues 235 to 250 are compositionally biased toward basic residues; that stretch reads RRSPSRNRYTRNRSYS. Residue S254 is modified to Phosphoserine.

The protein belongs to the splicing factor SR family. Extensively phosphorylated on serine residues in the RS domain. In terms of tissue distribution, isoform Tmaj and isoform Tmin are expressed in males and females. Isoform msTmaj and isoform msTmin are present only in male germ cells.

Required for female sex determination in somatic cells and for spermatogenesis in male germ cells. Positive regulator of female-specific splicing and/or polyadenylation of doublesex (dsx) pre-mRNA. Splicing requires an enhancer complex, dsxRE (dsx repeat element: which contains six copies of a 13-nucleotide repeat and a purine-rich enhancer (PRE)). DsxRE is formed through cooperative interactions between tra, tra2 and the sr proteins, and these interactions require both the repeat sequences and PRE. PRE is required for specific binding of tra2 to the dsxRE. Protein-RNA and protein-protein interactions are involved in tra-2 dependent activation and repression of alternative splicing. Together with tra-2, plays a role in switching fru splicing from the male-specific pattern to the female-specific pattern through activation of the female-specific fru 5'-splice site. This Drosophila melanogaster (Fruit fly) protein is Transformer-2 sex-determining protein (tra2).